Here is a 153-residue protein sequence, read N- to C-terminus: 6,7-dimethyl-8-ribityllumazine synthase (153 aa).

5-amino-6-(D-ribitylamino)uracil-binding positions include phenylalanine 22, alanine 56–glutamate 58, and alanine 80–isoleucine 82. Position 85-86 (alanine 85–threonine 86) interacts with (2S)-2-hydroxy-3-oxobutyl phosphate. Residue histidine 88 is the Proton donor of the active site. Phenylalanine 113 is a 5-amino-6-(D-ribitylamino)uracil binding site. Position 127 (arginine 127) interacts with (2S)-2-hydroxy-3-oxobutyl phosphate.

Belongs to the DMRL synthase family.

It carries out the reaction (2S)-2-hydroxy-3-oxobutyl phosphate + 5-amino-6-(D-ribitylamino)uracil = 6,7-dimethyl-8-(1-D-ribityl)lumazine + phosphate + 2 H2O + H(+). It participates in cofactor biosynthesis; riboflavin biosynthesis; riboflavin from 2-hydroxy-3-oxobutyl phosphate and 5-amino-6-(D-ribitylamino)uracil: step 1/2. Catalyzes the formation of 6,7-dimethyl-8-ribityllumazine by condensation of 5-amino-6-(D-ribitylamino)uracil with 3,4-dihydroxy-2-butanone 4-phosphate. This is the penultimate step in the biosynthesis of riboflavin. The polypeptide is 6,7-dimethyl-8-ribityllumazine synthase (Clostridium tetani (strain Massachusetts / E88)).